Consider the following 200-residue polypeptide: V-set and transmembrane domain-containing protein 5 (200 aa).

Positions 1 to 28 (MRPLPSGRRKTRGISLGLFALCLAAARC) are cleaved as a signal peptide. Residues 29–147 (LQSQGVSLYI…VSEILYEDLH (119 aa)) are Extracellular-facing. Residues 37–139 (YIPQATINAT…QFGTIVLHVS (103 aa)) form the Ig-like C2-type domain. The N-linked (GlcNAc...) asparagine glycan is linked to N102. The chain crosses the membrane as a helical span at residues 148-168 (FVAVILAFLAAVAAVLISLMW). Over 169–200 (VCNKCAYKFQRKRRHKLKESTTEEIELEDVEC) the chain is Cytoplasmic. The tract at residues 170-186 (CNKCAYKFQRKRRHKLK) is important for CDC42-dependent filopodia induction.

In terms of assembly, can homooligomerize through cis interactions within the same cell membrane. Post-translationally, N-glycosylated.

The protein resides in the cell membrane. The protein localises to the cell projection. It is found in the dendrite. Its subcellular location is the axon. Its function is as follows. Cell adhesion-like membrane protein of the central nervous system (CNS) which modulates both the position and complexity of central neurons by altering their membrane morphology and dynamics. Involved in the formation of neuronal dendrites and protrusions including dendritic filopodia. In synaptogenesis, regulates synapse formation by altering dendritic spine morphology and actin distribution. Promotes formation of unstable neuronal spines such as thin and branched types. Regulates neuronal morphogenesis and migration during cortical development in the brain. In Homo sapiens (Human), this protein is V-set and transmembrane domain-containing protein 5 (VSTM5).